We begin with the raw amino-acid sequence, 214 residues long: Hypoxanthine-guanine phosphoribosyltransferase (214 aa).

Residue A2 is modified to N-acetylalanine. K69 is a binding site for GMP. The residue at position 103 (K103) is an N6-acetyllysine. Residue K115 forms a Glycyl lysine isopeptide (Lys-Gly) (interchain with G-Cter in SUMO1); alternate linkage. K115 is covalently cross-linked (Glycyl lysine isopeptide (Lys-Gly) (interchain with G-Cter in SUMO2); alternate). Residues 134-142 (EDIIDTGKT), K166, 186-188 (KFV), and D194 each bind GMP. D138 acts as the Proton acceptor in catalysis. T142 is modified (phosphothreonine). A Mg(2+)-binding site is contributed by D194.

This sequence belongs to the purine/pyrimidine phosphoribosyltransferase family. As to quaternary structure, homotetramer. The cofactor is Mg(2+).

It is found in the cytoplasm. The enzyme catalyses IMP + diphosphate = hypoxanthine + 5-phospho-alpha-D-ribose 1-diphosphate. It catalyses the reaction GMP + diphosphate = guanine + 5-phospho-alpha-D-ribose 1-diphosphate. Its pathway is purine metabolism; IMP biosynthesis via salvage pathway; IMP from hypoxanthine: step 1/1. Functionally, converts guanine to guanosine monophosphate, and hypoxanthine to inosine monophosphate. Transfers the 5-phosphoribosyl group from 5-phosphoribosylpyrophosphate onto the purine. Plays a central role in the generation of purine nucleotides through the purine salvage pathway. In Mus spretus (Western Mediterranean mouse), this protein is Hypoxanthine-guanine phosphoribosyltransferase (Hprt1).